Consider the following 325-residue polypeptide: Biotin synthase (325 aa).

A Radical SAM core domain is found at 49–278; that stretch reads FNGNIVDLCS…KASIRLAGGR (230 aa). [4Fe-4S] cluster is bound by residues Cys67, Cys71, and Cys74. Ser111, Cys143, Cys203, and Arg273 together coordinate [2Fe-2S] cluster.

This sequence belongs to the radical SAM superfamily. Biotin synthase family. Homodimer. Requires [4Fe-4S] cluster as cofactor. It depends on [2Fe-2S] cluster as a cofactor.

It catalyses the reaction (4R,5S)-dethiobiotin + (sulfur carrier)-SH + 2 reduced [2Fe-2S]-[ferredoxin] + 2 S-adenosyl-L-methionine = (sulfur carrier)-H + biotin + 2 5'-deoxyadenosine + 2 L-methionine + 2 oxidized [2Fe-2S]-[ferredoxin]. The protein operates within cofactor biosynthesis; biotin biosynthesis; biotin from 7,8-diaminononanoate: step 2/2. Catalyzes the conversion of dethiobiotin (DTB) to biotin by the insertion of a sulfur atom into dethiobiotin via a radical-based mechanism. The sequence is that of Biotin synthase from Clostridium tetani (strain Massachusetts / E88).